The chain runs to 514 residues: 2,3-bisphosphoglycerate-independent phosphoglycerate mutase (514 aa).

Asp14 and Ser64 together coordinate Mn(2+). The active-site Phosphoserine intermediate is Ser64. Substrate contacts are provided by residues His125, 155-156 (RD), Arg187, Arg193, 263-266 (RADR), and Lys336. Residues Asp403, His407, Asp444, His445, and His463 each coordinate Mn(2+).

It belongs to the BPG-independent phosphoglycerate mutase family. In terms of assembly, monomer. The cofactor is Mn(2+).

The catalysed reaction is (2R)-2-phosphoglycerate = (2R)-3-phosphoglycerate. It participates in carbohydrate degradation; glycolysis; pyruvate from D-glyceraldehyde 3-phosphate: step 3/5. Functionally, catalyzes the interconversion of 2-phosphoglycerate and 3-phosphoglycerate. The protein is 2,3-bisphosphoglycerate-independent phosphoglycerate mutase of Shigella flexneri.